A 145-amino-acid chain; its full sequence is D-aminoacyl-tRNA deacylase (145 aa).

The short motif at 137-138 (GP) is the Gly-cisPro motif, important for rejection of L-amino acids element.

Belongs to the DTD family. Homodimer.

It localises to the cytoplasm. It catalyses the reaction glycyl-tRNA(Ala) + H2O = tRNA(Ala) + glycine + H(+). The catalysed reaction is a D-aminoacyl-tRNA + H2O = a tRNA + a D-alpha-amino acid + H(+). In terms of biological role, an aminoacyl-tRNA editing enzyme that deacylates mischarged D-aminoacyl-tRNAs. Also deacylates mischarged glycyl-tRNA(Ala), protecting cells against glycine mischarging by AlaRS. Acts via tRNA-based rather than protein-based catalysis; rejects L-amino acids rather than detecting D-amino acids in the active site. By recycling D-aminoacyl-tRNA to D-amino acids and free tRNA molecules, this enzyme counteracts the toxicity associated with the formation of D-aminoacyl-tRNA entities in vivo and helps enforce protein L-homochirality. This is D-aminoacyl-tRNA deacylase from Pectobacterium carotovorum subsp. carotovorum (strain PC1).